A 2131-amino-acid chain; its full sequence is Beta/gamma crystallin domain-containing protein 1 (2131 aa).

5 disordered regions span residues 1-53, 104-370, 385-674, 688-707, and 723-743; these read MPLS…LPAP, KSRA…KGHA, TEGA…PVHK, RTNS…TPAS, and AKEM…NGVL. Over residues 19–35 the composition is skewed to basic residues; sequence PPKKHTTFHLWRSKKKQ. Residues 135–147 show a composition bias toward polar residues; sequence RNGLESPTRSNAK. Composition is skewed to basic and acidic residues over residues 160 to 169 and 184 to 194; these read LPERESERSR and GSPRENPREAE. Residues 248 to 265 are compositionally biased toward polar residues; the sequence is ATTTAKQLHSSPGNSSRQ. A compositionally biased stretch (basic residues) spans 414–424; it reads SGRRSGRRRGS. Residues 479 to 490 show a composition bias toward low complexity; the sequence is ASAASPESKPSP. Residues Ser483 and Ser489 each carry the phosphoserine modification. Basic and acidic residues-rich tracts occupy residues 536-546 and 562-572; these read PAKESPPKRVP and EAARAIPRELP. A compositionally biased stretch (low complexity) spans 609–619; sequence RAAGAPGASDA. Positions 723-733 are enriched in basic and acidic residues; that stretch reads AKEMEQPEKKV. Ser737 and Ser756 each carry phosphoserine. Disordered stretches follow at residues 758–791 and 837–889; these read EEIL…DVQT and DIPT…KDTC. The span at 769-782 shows a compositional bias: polar residues; that stretch reads GDSSENQALGPQPN. Residues 864–881 show a composition bias toward low complexity; sequence SPAESSPGPSLSLSAPAP. At Ser892 the chain carries Phosphoserine. Disordered regions lie at residues 926-947, 1041-1101, 1271-1302, and 1316-1348; these read LELG…AVGS, QAQS…VFDS, STSQ…EQSN, and SSST…SRSN. Thr933 bears the Phosphothreonine mark. The span at 1055-1089 shows a compositional bias: polar residues; the sequence is SSPTNSPSSGNHLATPQRPDQTVTNGQDSPASLLN. Low complexity-rich tracts occupy residues 1091–1101, 1271–1288, and 1316–1327; these read SAGSDDSVFDS, STSQ…QPTT, and SSSTSHSSLKSP. The span at 1328 to 1348 shows a compositional bias: basic and acidic residues; that stretch reads SHMEKYPQKEKTKEDLDSRSN. 12 Beta/gamma crystallin 'Greek key' domains span residues 1430 to 1469, 1470 to 1525, 1531 to 1571, 1572 to 1614, 1626 to 1678, 1679 to 1721, 1727 to 1769, 1770 to 1812, 1823 to 1860, 1861 to 1904, 1910 to 1950, and 1951 to 1992; these read GKVV…KVVR, GCWI…RHVV, SHID…KVHW, GTWL…RPLK, PKVV…KVLR, GIWV…RPIL, AHMI…NVLS, GVWV…QPIC, NQIH…RVSG, GSWV…RFID, PTII…QVIG, and GIWV…RPFV. In terms of domain architecture, Ricin B-type lectin spans 1994–2127; sequence KRIYFRLRNK…EKFTQVWEAM (134 aa).

Belongs to the beta/gamma-crystallin family.

Functionally, may function as suppressor of malignant melanoma. It may exert its effects through interactions with the cytoskeleton. The sequence is that of Beta/gamma crystallin domain-containing protein 1 from Homo sapiens (Human).